The sequence spans 216 residues: Capsule polysaccharide export ATP-binding protein CtrD (216 aa).

Positions 2–215 constitute an ABC transporter domain; it reads ISVEHVSKRY…DKAYEYYNSL (214 aa). Position 38–45 (38–45) interacts with ATP; the sequence is GRNGAGKS.

Belongs to the ABC transporter superfamily.

The protein resides in the cell inner membrane. The enzyme catalyses ATP + H2O + capsular polysaccharide-[capsular polysaccharide-binding protein]Side 1 = ADP + phosphate + capsular polysaccharideSide 2 + [capsular polysaccharide-binding protein]Side 1.. In terms of biological role, putative ATP-binding protein, and an energy-coupling component of capsule polysaccharide export apparatus. This Neisseria meningitidis serogroup B (strain ATCC BAA-335 / MC58) protein is Capsule polysaccharide export ATP-binding protein CtrD (ctrD).